A 739-amino-acid polypeptide reads, in one-letter code: Transcription activator of gluconeogenesis MCYG_04674 (739 aa).

Residues 1-33 are compositionally biased toward polar residues; it reads MSPHQTTGQESDNMAVNGENAQASSQYIQLNSE. Residues 1-62 are disordered; that stretch reads MSPHQTTGQE…PSRPKRKKAK (62 aa). The segment covering 40–55 has biased composition (basic and acidic residues); sequence AAEKKAAAAKAKDPSR. A DNA-binding region (zn(2)-C6 fungal-type) is located at residues 65 to 93; the sequence is CYACQRGHLTCGDERPCQRCIKRGFQDAC. Disordered stretches follow at residues 174-223, 264-308, 380-420, 537-574, and 639-668; these read GPEN…QFNS, DTPP…GDSG, SRQN…HKNA, NHNVNTGGSSGLLTGSTSRGSYTPRPYSSDQFNSSTTA, and AQNNEVGSGEANELNSSSNGTTSTGRGQRR. Composition is skewed to polar residues over residues 267–284 and 397–411; these read PSDNGAQRGSIGQNSSGT and PVVSTPQLKQQNLNI. A compositionally biased stretch (low complexity) spans 547-557; the sequence is GLLTGSTSRGS. Polar residues predominate over residues 562 to 574; the sequence is PYSSDQFNSSTTA. Positions 653 to 664 are enriched in low complexity; the sequence is NSSSNGTTSTGR.

This sequence belongs to the ERT1/acuK family.

It localises to the nucleus. In terms of biological role, transcription factor which regulates nonfermentable carbon utilization. Activator of gluconeogenetic genes. This is Transcription activator of gluconeogenesis MCYG_04674 from Arthroderma otae (strain ATCC MYA-4605 / CBS 113480) (Microsporum canis).